Reading from the N-terminus, the 473-residue chain is Photosystem II CP43 reaction center protein (473 aa).

The propeptide occupies 1–14; that stretch reads MKTLYSLRRFYPVE. Threonine 15 carries the N-acetylthreonine modification. Phosphothreonine is present on threonine 15. Helical transmembrane passes span 69–93, 134–155, 178–200, 255–275, and 291–312; these read LFEV…PHLA, LLGP…KDRN, KALY…RKIT, KPFA…LSYS, and WFNN…ASQA. [CaMn4O5] cluster is bound at residue glutamate 367. A helical transmembrane segment spans residues 447-471; sequence RARAAAAGFEKGIDRDFEPVLSMTP.

The protein belongs to the PsbB/PsbC family. PsbC subfamily. As to quaternary structure, PSII is composed of 1 copy each of membrane proteins PsbA, PsbB, PsbC, PsbD, PsbE, PsbF, PsbH, PsbI, PsbJ, PsbK, PsbL, PsbM, PsbT, PsbX, PsbY, PsbZ, Psb30/Ycf12, at least 3 peripheral proteins of the oxygen-evolving complex and a large number of cofactors. It forms dimeric complexes. It depends on Binds multiple chlorophylls and provides some of the ligands for the Ca-4Mn-5O cluster of the oxygen-evolving complex. It may also provide a ligand for a Cl- that is required for oxygen evolution. PSII binds additional chlorophylls, carotenoids and specific lipids. as a cofactor.

It localises to the plastid. The protein resides in the chloroplast thylakoid membrane. Its function is as follows. One of the components of the core complex of photosystem II (PSII). It binds chlorophyll and helps catalyze the primary light-induced photochemical processes of PSII. PSII is a light-driven water:plastoquinone oxidoreductase, using light energy to abstract electrons from H(2)O, generating O(2) and a proton gradient subsequently used for ATP formation. This is Photosystem II CP43 reaction center protein from Helianthus annuus (Common sunflower).